A 260-amino-acid chain; its full sequence is Taurine import ATP-binding protein TauB (260 aa).

In terms of domain architecture, ABC transporter spans 6-235; that stretch reads AQQVSVVYAS…RYAHGEPVRS (230 aa). 40-47 serves as a coordination point for ATP; the sequence is GASGCGKS.

It belongs to the ABC transporter superfamily. Taurine importer (TC 3.A.1.17.1) family. In terms of assembly, the complex is composed of two ATP-binding proteins (TauB), two transmembrane proteins (TauC) and a solute-binding protein (TauA).

The protein resides in the cell inner membrane. The enzyme catalyses taurine(out) + ATP + H2O = taurine(in) + ADP + phosphate + H(+). Its function is as follows. Part of the ABC transporter complex TauABC involved in taurine import. Responsible for energy coupling to the transport system. This chain is Taurine import ATP-binding protein TauB, found in Burkholderia pseudomallei (strain K96243).